The primary structure comprises 233 residues: 1-(5-phosphoribosyl)-5-[(5-phosphoribosylamino)methylideneamino] imidazole-4-carboxamide isomerase (233 aa).

Catalysis depends on D8, which acts as the Proton acceptor. D125 (proton donor) is an active-site residue.

The protein belongs to the HisA/HisF family.

It localises to the cytoplasm. It carries out the reaction 1-(5-phospho-beta-D-ribosyl)-5-[(5-phospho-beta-D-ribosylamino)methylideneamino]imidazole-4-carboxamide = 5-[(5-phospho-1-deoxy-D-ribulos-1-ylimino)methylamino]-1-(5-phospho-beta-D-ribosyl)imidazole-4-carboxamide. It functions in the pathway amino-acid biosynthesis; L-histidine biosynthesis; L-histidine from 5-phospho-alpha-D-ribose 1-diphosphate: step 4/9. This Thermococcus kodakarensis (strain ATCC BAA-918 / JCM 12380 / KOD1) (Pyrococcus kodakaraensis (strain KOD1)) protein is 1-(5-phosphoribosyl)-5-[(5-phosphoribosylamino)methylideneamino] imidazole-4-carboxamide isomerase.